The chain runs to 541 residues: Kinesin light chain 1 (541 aa).

A coiled-coil region spans residues 27–156 (KTKQVIQGLE…HLEFMNQLKK (130 aa)). Over residues 156 to 176 (KYDDDISPSEDKDSDSSKEPL) the composition is skewed to basic and acidic residues. A disordered region spans residues 156-201 (KYDDDISPSEDKDSDSSKEPLDDLFPNDEDEPGQGIQHSDSSAAAA). Ser-162 is subject to Phosphoserine. 5 TPR repeats span residues 211-244 (LRTLHNLVIQYASQGRYEVAVPSCKQALEDLEKT), 253-286 (ATMLNILALVYRDQNKYKDAANLLNDALAIREKT), 295-328 (AATLNNLAVLYGKRGKYKEAEPLCKRALEIREKV), 337-370 (AKQLNNLALLCQNQGKYEEVEYYYQRALGIYQTK), and 380-413 (AKTKNNLASCYLKQGKFKQAETLYKEILTRAHEA). At Tyr-448 the chain carries Phosphotyrosine. Phosphoserine is present on Ser-459. Residues 463–496 (TTTLKNLGALYRRQGKFEAAETLEEAAMRSRKQG) form a TPR 6 repeat. The segment at 493 to 541 (RKQGLDNVHKQRVAEVLNDPESMEKRRSRESLNMDVVKYESGPDGGEEA) is disordered. Composition is skewed to basic and acidic residues over residues 495-505 (QGLDNVHKQRV) and 514-524 (SMEKRRSRESL). Residues Ser-520 and Ser-523 each carry the phosphoserine; by AMPK modification.

It belongs to the kinesin light chain family. As to quaternary structure, oligomeric complex composed of two heavy chains and two light chains. Interacts with SPAG9. Interacts with ATCAY; may link mitochondria to KLC1 and regulate mitochondria localization into neuron projections. Interacts (via TPR repeats) with TOR1A; the interaction associates TOR1A with the kinesin oligomeric complex. Interacts with BORCS5. Interacts with MAPK8IP3/JIP3 and NTRK2/TRKB; interaction with NTRK2/TRKB is mediated by MAPK8IP3/JIP3. Interacts with CLSTN1; phosphorylation at Ser-459 inhibits interaction with CLSTN1. Post-translationally, phosphorylation at Ser-459 by ERK inhibits interaction with CLSTN1 and localization to cytoplasmic vesicles.

It is found in the cell projection. The protein localises to the growth cone. It localises to the cytoplasmic vesicle. Its subcellular location is the cytoplasm. The protein resides in the cytoskeleton. Functionally, kinesin is a microtubule-associated force-producing protein that may play a role in organelle transport. The light chain may function in coupling of cargo to the heavy chain or in the modulation of its ATPase activity. This is Kinesin light chain 1 (Klc1) from Mus musculus (Mouse).